We begin with the raw amino-acid sequence, 100 residues long: Urease subunit gamma (100 aa).

The protein belongs to the urease gamma subunit family. Heterotrimer of UreA (gamma), UreB (beta) and UreC (alpha) subunits. Three heterotrimers associate to form the active enzyme.

It is found in the cytoplasm. The catalysed reaction is urea + 2 H2O + H(+) = hydrogencarbonate + 2 NH4(+). Its pathway is nitrogen metabolism; urea degradation; CO(2) and NH(3) from urea (urease route): step 1/1. The sequence is that of Urease subunit gamma from Burkholderia orbicola (strain MC0-3).